The primary structure comprises 277 residues: Diaminopimelate epimerase (277 aa).

Asparagine 13, glutamine 46, and asparagine 66 together coordinate substrate. Cysteine 75 (proton donor) is an active-site residue. Residues 76–77 (GN), asparagine 160, asparagine 193, and 211–212 (ER) each bind substrate. Cysteine 220 functions as the Proton acceptor in the catalytic mechanism. 221–222 (GS) contacts substrate.

It belongs to the diaminopimelate epimerase family. As to quaternary structure, homodimer.

It localises to the cytoplasm. It catalyses the reaction (2S,6S)-2,6-diaminopimelate = meso-2,6-diaminopimelate. Its pathway is amino-acid biosynthesis; L-lysine biosynthesis via DAP pathway; DL-2,6-diaminopimelate from LL-2,6-diaminopimelate: step 1/1. Functionally, catalyzes the stereoinversion of LL-2,6-diaminopimelate (L,L-DAP) to meso-diaminopimelate (meso-DAP), a precursor of L-lysine and an essential component of the bacterial peptidoglycan. The polypeptide is Diaminopimelate epimerase (Legionella pneumophila (strain Corby)).